Reading from the N-terminus, the 380-residue chain is Carbonic anhydrase 2 (380 aa).

The signal sequence occupies residues 1 to 20; the sequence is MARTGALLLAALALAGCAQA. The region spanning 38–322 is the Alpha-carbonic anhydrase domain; it reads DHWDHSLNGE…HHHRRLLHNH (285 aa). 3 disulfide bridges follow: Cys-61/Cys-264, Cys-194/Cys-198, and Cys-296/Cys-354. The N-linked (GlcNAc...) asparagine glycan is linked to Asn-101. His-112 functions as the Proton acceptor in the catalytic mechanism. Asn-135 carries N-linked (GlcNAc...) asparagine glycosylation. Zn(2+)-binding residues include His-163, His-165, and His-182. 260–261 is a binding site for substrate; the sequence is TT. Residue Asn-297 is glycosylated (N-linked (GlcNAc...) asparagine).

The protein belongs to the alpha-carbonic anhydrase family. In terms of assembly, tetramer of two large and two small subunits linked by two disulfide bonds. Requires Zn(2+) as cofactor.

It is found in the periplasm. The catalysed reaction is hydrogencarbonate + H(+) = CO2 + H2O. Functionally, reversible hydration of carbon dioxide. The protein is Carbonic anhydrase 2 (CAH2) of Chlamydomonas reinhardtii (Chlamydomonas smithii).